A 198-amino-acid polypeptide reads, in one-letter code: Transmembrane protein 9B (198 aa).

Residues 1–33 (MATLWGGLLRLGSLLSLSCLALSVLLLAQLSDA) form the signal peptide. Asn60 carries N-linked (GlcNAc...) asparagine glycosylation. Residues 105 to 125 (IIIYLSILGLLLLYMVYLTLV) traverse the membrane as a helical segment. Residues Ser142 and Ser189 each carry the phosphoserine modification.

Belongs to the TMEM9 family. N-glycosylated.

It localises to the lysosome membrane. It is found in the early endosome membrane. In terms of biological role, enhances production of pro-inflammatory cytokines induced by TNF, IL1B, and TLR ligands. Has a role in TNF activation of both the NF-kappaB and MAPK pathways. This Homo sapiens (Human) protein is Transmembrane protein 9B (TMEM9B).